Here is a 203-residue protein sequence, read N- to C-terminus: Pyridoxal 5'-phosphate synthase subunit PdxT (203 aa).

49-51 (GES) is an L-glutamine binding site. C81 functions as the Nucleophile in the catalytic mechanism. Residues R110 and 139 to 140 (IR) contribute to the L-glutamine site. Residues H175 and E177 each act as charge relay system in the active site.

This sequence belongs to the glutaminase PdxT/SNO family. In the presence of PdxS, forms a dodecamer of heterodimers. Only shows activity in the heterodimer.

It catalyses the reaction aldehydo-D-ribose 5-phosphate + D-glyceraldehyde 3-phosphate + L-glutamine = pyridoxal 5'-phosphate + L-glutamate + phosphate + 3 H2O + H(+). It carries out the reaction L-glutamine + H2O = L-glutamate + NH4(+). Its pathway is cofactor biosynthesis; pyridoxal 5'-phosphate biosynthesis. Its function is as follows. Catalyzes the hydrolysis of glutamine to glutamate and ammonia as part of the biosynthesis of pyridoxal 5'-phosphate. The resulting ammonia molecule is channeled to the active site of PdxS. The sequence is that of Pyridoxal 5'-phosphate synthase subunit PdxT from Parafrankia sp. (strain EAN1pec).